The chain runs to 381 residues: GDP-mannose transporter (381 aa).

At 1–39 (MVESKKTDDYAIEMDKIDQGSKNFEAAAPPQPRSVPSSS) the chain is on the cytoplasmic side. The helical transmembrane segment at 40–60 (LSGNPVLPVLAYCGSSILMTV) threads the bilayer. Residues 61–68 (MNKYVLSG) lie on the Lumenal side of the membrane. A helical membrane pass occupies residues 69-89 (LDFNLNFFLLCVQSIVCIIAI). Residues 90 to 109 (QTCKFCGLITYRDFSADEAK) are Cytoplasmic-facing. The helical transmembrane segment at 110-126 (KWFPISLLLIGMIYTGS) threads the bilayer. Residues 127–133 (KALQFLS) are Lumenal-facing. The chain crosses the membrane as a helical span at residues 134–150 (IPVYTIFKNLTIILIAY). Residues 151 to 159 (GEVLWFGGS) are Cytoplasmic-facing. The helical transmembrane segment at 160-181 (VTGLTLFSFGLMVLSSIIAAWA) threads the bilayer. Topologically, residues 182-199 (DIKHAVESSGDTSAQVST) are lumenal. A helical membrane pass occupies residues 200-220 (LNAGYIWMLINCLCTSSYVLG). Over 221–232 (MRKRIKLTNFKD) the chain is Cytoplasmic. A helical transmembrane segment spans residues 233–253 (FDTMFYNNLLSIPVLVVLTGL). Residues 254–273 (MEDWSSANIDRNFPQADRSS) lie on the Lumenal side of the membrane. Residues 274–294 (IMFAMILSGLSSVFISYTSAW) traverse the membrane as a helical segment. Topologically, residues 295-302 (CVRVTSST) are cytoplasmic. The helical transmembrane segment at 303–323 (TYSMVGALNKLPIALSGLIFF) threads the bilayer. Topologically, residues 324-326 (DAP) are lumenal. The chain crosses the membrane as a helical span at residues 327–347 (VTFPSVSAIAVGFVSGIVYAI). Residues 348–381 (AKIKQNAKPKTGVLPTSNPLVSASSQSMRDSLRS) lie on the Cytoplasmic side of the membrane.

It belongs to the TPT transporter family. SLC35D subfamily. As to quaternary structure, homooligomer.

Its subcellular location is the golgi apparatus membrane. It localises to the cytoplasmic vesicle membrane. The protein resides in the endoplasmic reticulum membrane. Involved in the import of GDP-mannose from the cytoplasm into the Golgi lumen. In Aspergillus oryzae (strain ATCC 42149 / RIB 40) (Yellow koji mold), this protein is GDP-mannose transporter (gmt1).